Consider the following 261-residue polypeptide: Indole-3-glycerol phosphate synthase (261 aa).

The protein belongs to the TrpC family.

The catalysed reaction is 1-(2-carboxyphenylamino)-1-deoxy-D-ribulose 5-phosphate + H(+) = (1S,2R)-1-C-(indol-3-yl)glycerol 3-phosphate + CO2 + H2O. Its pathway is amino-acid biosynthesis; L-tryptophan biosynthesis; L-tryptophan from chorismate: step 4/5. This chain is Indole-3-glycerol phosphate synthase, found in Campylobacter hominis (strain ATCC BAA-381 / DSM 21671 / CCUG 45161 / LMG 19568 / NCTC 13146 / CH001A).